A 230-amino-acid chain; its full sequence is Large ribosomal subunit protein uL1 (230 aa).

This sequence belongs to the universal ribosomal protein uL1 family. In terms of assembly, part of the 50S ribosomal subunit.

Its function is as follows. Binds directly to 23S rRNA. The L1 stalk is quite mobile in the ribosome, and is involved in E site tRNA release. Protein L1 is also a translational repressor protein, it controls the translation of the L11 operon by binding to its mRNA. The chain is Large ribosomal subunit protein uL1 from Staphylococcus aureus (strain Mu3 / ATCC 700698).